The following is a 207-amino-acid chain: Urease accessory protein UreE (207 aa).

Positions 171–207 (HHGHAHSHSHSHDHDHDHDHDHQHGPGCAHGHGHDHH) are disordered. Residues 180-194 (HSHDHDHDHDHDHQH) show a composition bias toward basic and acidic residues.

The protein belongs to the UreE family.

The protein localises to the cytoplasm. Functionally, involved in urease metallocenter assembly. Binds nickel. Probably functions as a nickel donor during metallocenter assembly. This is Urease accessory protein UreE from Burkholderia lata (strain ATCC 17760 / DSM 23089 / LMG 22485 / NCIMB 9086 / R18194 / 383).